Consider the following 327-residue polypeptide: GMP reductase (327 aa).

C175 (thioimidate intermediate) is an active-site residue. Position 204–227 (204–227 (IIADGGIRTHGDVAKSIRFGATMV)) interacts with NADP(+).

It belongs to the IMPDH/GMPR family. GuaC type 2 subfamily.

The catalysed reaction is IMP + NH4(+) + NADP(+) = GMP + NADPH + 2 H(+). Catalyzes the irreversible NADPH-dependent deamination of GMP to IMP. It functions in the conversion of nucleobase, nucleoside and nucleotide derivatives of G to A nucleotides, and in maintaining the intracellular balance of A and G nucleotides. The polypeptide is GMP reductase (Bacillus cereus (strain ATCC 10987 / NRS 248)).